The chain runs to 188 residues: dCTP deaminase (188 aa).

DCTP-binding positions include 111-116, 135-137, Gln156, Tyr170, and Gln180; these read KSTYAR and TLE. Residue Glu137 is the Proton donor/acceptor of the active site.

The protein belongs to the dCTP deaminase family. In terms of assembly, homotrimer.

It carries out the reaction dCTP + H2O + H(+) = dUTP + NH4(+). It participates in pyrimidine metabolism; dUMP biosynthesis; dUMP from dCTP (dUTP route): step 1/2. Catalyzes the deamination of dCTP to dUTP. The chain is dCTP deaminase from Legionella pneumophila (strain Paris).